Here is a 485-residue protein sequence, read N- to C-terminus: Putative ATP-dependent RNA helicase ste13 (485 aa).

The tract at residues 16-38 (DRESFKGQMKAQPVDMRPKTEDV) is disordered. A Q motif motif is present at residues 44–72 (TEFEDYYLKRELLMGIFEAGFERPSPIQE). The region spanning 75–245 (IPIALSGRDI…DKHLNKPYEI (171 aa)) is the Helicase ATP-binding domain. Position 88-95 (88-95 (AKNGTGKT)) interacts with ATP. The DEAD box signature appears at 193-196 (DEAD). The Helicase C-terminal domain occupies 255–415 (GVTQYYAFVD…PIPPSIDPSL (161 aa)). The tract at residues 437-485 (LAAQQAKGQEGYHNRPNNNRGGHPRGGGNRGGYRQSNRQPRYRGQQKAD) is disordered.

Belongs to the DEAD box helicase family. DDX6/DHH1 subfamily.

It localises to the cytoplasm. It is found in the P-body. The enzyme catalyses ATP + H2O = ADP + phosphate + H(+). In terms of biological role, ATP-dependent RNA helicase involved in mRNA turnover, and more specifically in mRNA decapping. Is involved in G1/S DNA-damage checkpoint recovery, probably through the regulation of the translational status of a subset of mRNAs. May also have a role in translation and mRNA nuclear export. This is Putative ATP-dependent RNA helicase ste13 (ste13) from Schizosaccharomyces pombe (strain 972 / ATCC 24843) (Fission yeast).